The sequence spans 111 residues: Stress-response A/B barrel domain-containing protein At5g22580 (111 aa).

The Stress-response A/B barrel domain occupies 6–98 (FKHLVVVKFK…VIDKIVLLDF (93 aa)). Mg(2+)-binding residues include V31, I34, D35, and V37.

Homodimer. Mg(2+) serves as cofactor.

Its function is as follows. Involved in stress response. In Arabidopsis thaliana (Mouse-ear cress), this protein is Stress-response A/B barrel domain-containing protein At5g22580.